A 337-amino-acid chain; its full sequence is UDP-3-O-acylglucosamine N-acyltransferase 2 (337 aa).

The active-site Proton acceptor is the histidine 238.

This sequence belongs to the transferase hexapeptide repeat family. LpxD subfamily. As to quaternary structure, homotrimer.

It catalyses the reaction a UDP-3-O-[(3R)-3-hydroxyacyl]-alpha-D-glucosamine + a (3R)-hydroxyacyl-[ACP] = a UDP-2-N,3-O-bis[(3R)-3-hydroxyacyl]-alpha-D-glucosamine + holo-[ACP] + H(+). Its pathway is bacterial outer membrane biogenesis; LPS lipid A biosynthesis. In terms of biological role, catalyzes the N-acylation of UDP-3-O-acylglucosamine using 3-hydroxyacyl-ACP as the acyl donor. Is involved in the biosynthesis of lipid A, a phosphorylated glycolipid that anchors the lipopolysaccharide to the outer membrane of the cell. The chain is UDP-3-O-acylglucosamine N-acyltransferase 2 from Francisella tularensis subsp. tularensis (strain FSC 198).